The primary structure comprises 237 residues: Small ribosomal subunit protein uS2m (237 aa).

The protein belongs to the universal ribosomal protein uS2 family.

Its subcellular location is the mitochondrion. The protein is Small ribosomal subunit protein uS2m (RPS2) of Marchantia polymorpha (Common liverwort).